The primary structure comprises 186 residues: Large ribosomal subunit protein uL22 (186 aa).

2 stretches are compositionally biased toward basic and acidic residues: residues 157-167 and 177-186; these read VSKATDDEPTK and RQKEKMLRSE. The tract at residues 157–186 is disordered; sequence VSKATDDEPTKKKLSKKKLQRQKEKMLRSE.

It belongs to the universal ribosomal protein uL22 family.

The polypeptide is Large ribosomal subunit protein uL22 (RpL17) (Drosophila yakuba (Fruit fly)).